The following is a 122-amino-acid chain: MRKYETIFILQPDLAEDDVKSVTDKVQDVVASLKGDFHRLDDWGTRKLAYAIRKFPRGRYYYLRFDGGAQLVAELERRLRLDEKVLRFLSVNITDEPEKKVAERKPVIEAAEAPEAAEAAAE.

The protein belongs to the bacterial ribosomal protein bS6 family.

Functionally, binds together with bS18 to 16S ribosomal RNA. This is Small ribosomal subunit protein bS6 from Trichlorobacter lovleyi (strain ATCC BAA-1151 / DSM 17278 / SZ) (Geobacter lovleyi).